The following is a 462-amino-acid chain: Chromosomal replication initiator protein DnaA (462 aa).

The tract at residues 1-84 is domain I, interacts with DnaA modulators; that stretch reads MAVSLWQQCI…RFDIGSRPSA (84 aa). Positions 84 to 125 are domain II; sequence APKPIQATAAVVKPKLESSPQKSQTSFNVNAPEPAATANHRS. The interval 126-342 is domain III, AAA+ region; it reads NINPTYQFEN…GALNRVIANA (217 aa). Residues glycine 170, glycine 172, lysine 173, and threonine 174 each coordinate ATP. Positions 343–462 are domain IV, binds dsDNA; sequence NFTGRPITID…YANLIRTLSS (120 aa).

It belongs to the DnaA family. Oligomerizes as a right-handed, spiral filament on DNA at oriC.

It localises to the cytoplasm. Its function is as follows. Plays an essential role in the initiation and regulation of chromosomal replication. ATP-DnaA binds to the origin of replication (oriC) to initiate formation of the DNA replication initiation complex once per cell cycle. Binds the DnaA box (a 9 base pair repeat at the origin) and separates the double-stranded (ds)DNA. Forms a right-handed helical filament on oriC DNA; dsDNA binds to the exterior of the filament while single-stranded (ss)DNA is stabiized in the filament's interior. The ATP-DnaA-oriC complex binds and stabilizes one strand of the AT-rich DNA unwinding element (DUE), permitting loading of DNA polymerase. After initiation quickly degrades to an ADP-DnaA complex that is not apt for DNA replication. Binds acidic phospholipids. This is Chromosomal replication initiator protein DnaA from Shewanella woodyi (strain ATCC 51908 / MS32).